The following is a 501-amino-acid chain: Lysine--tRNA ligase (501 aa).

Mg(2+)-binding residues include E411 and E418.

This sequence belongs to the class-II aminoacyl-tRNA synthetase family. As to quaternary structure, homodimer. Mg(2+) serves as cofactor.

The protein localises to the cytoplasm. It catalyses the reaction tRNA(Lys) + L-lysine + ATP = L-lysyl-tRNA(Lys) + AMP + diphosphate. The sequence is that of Lysine--tRNA ligase from Clostridium perfringens (strain 13 / Type A).